The sequence spans 573 residues: Proline--tRNA ligase (573 aa).

The protein belongs to the class-II aminoacyl-tRNA synthetase family. ProS type 1 subfamily. As to quaternary structure, homodimer.

It localises to the cytoplasm. The enzyme catalyses tRNA(Pro) + L-proline + ATP = L-prolyl-tRNA(Pro) + AMP + diphosphate. In terms of biological role, catalyzes the attachment of proline to tRNA(Pro) in a two-step reaction: proline is first activated by ATP to form Pro-AMP and then transferred to the acceptor end of tRNA(Pro). As ProRS can inadvertently accommodate and process non-cognate amino acids such as alanine and cysteine, to avoid such errors it has two additional distinct editing activities against alanine. One activity is designated as 'pretransfer' editing and involves the tRNA(Pro)-independent hydrolysis of activated Ala-AMP. The other activity is designated 'posttransfer' editing and involves deacylation of mischarged Ala-tRNA(Pro). The misacylated Cys-tRNA(Pro) is not edited by ProRS. This Moorella thermoacetica (strain ATCC 39073 / JCM 9320) protein is Proline--tRNA ligase.